Consider the following 262-residue polypeptide: 4-hydroxy-2-oxo-heptane-1,7-dioate aldolase (262 aa).

H45 acts as the Proton acceptor in catalysis. Q147 contacts substrate. An a divalent metal cation-binding site is contributed by E149. Substrate-binding residues include A174 and D175. D175 serves as a coordination point for a divalent metal cation.

The protein belongs to the HpcH/HpaI aldolase family. Homohexamer; trimer of dimers. A divalent metal cation serves as cofactor.

It carries out the reaction 4-hydroxy-2-oxoheptanedioate = succinate semialdehyde + pyruvate. The protein operates within aromatic compound metabolism; 4-hydroxyphenylacetate degradation; pyruvate and succinate semialdehyde from 4-hydroxyphenylacetate: step 7/7. Catalyzes the reversible retro-aldol cleavage of 4-hydroxy-2-ketoheptane-1,7-dioate (HKHD) to pyruvate and succinic semialdehyde. This is 4-hydroxy-2-oxo-heptane-1,7-dioate aldolase from Shigella boydii serotype 4 (strain Sb227).